The primary structure comprises 185 residues: Ribosome-recycling factor (185 aa).

It belongs to the RRF family.

It is found in the cytoplasm. Responsible for the release of ribosomes from messenger RNA at the termination of protein biosynthesis. May increase the efficiency of translation by recycling ribosomes from one round of translation to another. This is Ribosome-recycling factor from Wolbachia sp. subsp. Brugia malayi (strain TRS).